The primary structure comprises 959 residues: MSDKTNDDKTLSVNPKKTLTLKRPGVEQSTVRQNFSHGRTKAVVVETKKRKFSRPDEKPEVEAAAAPKPAAPAAAPQQAPASAPVSASAAQASAPQPAPVKAPATKAPAAPSAPVTKPHVAQQRPVHQRPGGQQAQRPRPADRSGMVLNTLSRSEMDARRRALEEAQIREVEERARAVEEAKRRAEEDARRAKEREESARRQAEEEARLKAEAEARRKAEEEAAKRMPQPEARSERRDDARPAPYGARPQQAGRPQGGRPQPAGRPQQGSPRPAPIIADAAPIAGKPLPQSQLRKPGQSDDDDDRRSGAARRGVAAKPEVRAPKVVKGEDDRRRGKLTLTSNLEEEGRSRSLSAMRRRQEKFKRSQMQETREKISREVTIPETITLQELAQRMAERSVDIIKYLMKQGQMMKPGDVIDADTAQLIAEEFGHTVKRVAESDVEEGIFDVADNESAMVSRPPVVTIMGHVDHGKTSLLDAIRHANVVSGEAGGITQHIGAYQVVQNGQKITFIDTPGHAAFTAMRARGAQATDIAILVVAADDSVMPQTIESINHAKAAGVPIIVAINKIDKPAADPQKVRTALLQHEVFVESMGGEVLDVEVSAKNKINLDKLLDAVLLQAEMLDLKADPDRTAEGVVIEAQLDRGRGSVATVLIQKGTLHPGDILVAGSEWGRVRALVNDRGEHVKEAGPAMPVEILGLQGTPQAGDRFAVVANEAKAREIAEYRQRLARDKAVARQSGARGSLEQMMNQLQVSGTKEFPLVIKGDVQGSIEAITNALDKLGTDEVRARIVHSGAGGITESDVSLAEASNAAIIGFNVRANKQARDSAEQQGIEIRYYNIIYDLIDDVKAAMSGLLSPERRETFLGNAEILEVFNITKVGKVAGCRVTEGKVERGAGVRLIRDNVVIHEGKLKTLKRFKDEVAEVPSGQECGMAFENYDDIRAGDVIEAFRVEHVSRTL.

The span at 1 to 10 (MSDKTNDDKT) shows a compositional bias: basic and acidic residues. A disordered region spans residues 1–374 (MSDKTNDDKT…SQMQETREKI (374 aa)). Over residues 27–37 (EQSTVRQNFSH) the composition is skewed to polar residues. Low complexity-rich tracts occupy residues 63–118 (AAAA…VTKP) and 128–138 (QRPGGQQAQRP). Composition is skewed to basic and acidic residues over residues 154 to 225 (SEMD…EAAK) and 232 to 241 (ARSERRDDAR). Positions 246-284 (GARPQQAGRPQGGRPQPAGRPQQGSPRPAPIIADAAPIA) are enriched in low complexity. Residues 318–333 (PEVRAPKVVKGEDDRR) are compositionally biased toward basic and acidic residues. Residues 457-626 (SRPPVVTIMG…LLQAEMLDLK (170 aa)) enclose the tr-type G domain. The G1 stretch occupies residues 466–473 (GHVDHGKT). 466-473 (GHVDHGKT) lines the GTP pocket. Residues 491-495 (GITQH) are G2. The tract at residues 512–515 (DTPG) is G3. GTP is bound by residues 512–516 (DTPGH) and 566–569 (NKID). Positions 566-569 (NKID) are G4. The segment at 602 to 604 (SAK) is G5.

This sequence belongs to the TRAFAC class translation factor GTPase superfamily. Classic translation factor GTPase family. IF-2 subfamily.

It localises to the cytoplasm. Functionally, one of the essential components for the initiation of protein synthesis. Protects formylmethionyl-tRNA from spontaneous hydrolysis and promotes its binding to the 30S ribosomal subunits. Also involved in the hydrolysis of GTP during the formation of the 70S ribosomal complex. The polypeptide is Translation initiation factor IF-2 (Brucella abortus (strain 2308)).